Here is a 300-residue protein sequence, read N- to C-terminus: Ribosomal protein L11 methyltransferase (300 aa).

Positions 141, 164, 186, and 233 each coordinate S-adenosyl-L-methionine.

This sequence belongs to the methyltransferase superfamily. PrmA family.

It is found in the cytoplasm. The catalysed reaction is L-lysyl-[protein] + 3 S-adenosyl-L-methionine = N(6),N(6),N(6)-trimethyl-L-lysyl-[protein] + 3 S-adenosyl-L-homocysteine + 3 H(+). Its function is as follows. Methylates ribosomal protein L11. In Synechocystis sp. (strain ATCC 27184 / PCC 6803 / Kazusa), this protein is Ribosomal protein L11 methyltransferase.